The primary structure comprises 970 residues: MANETQKVGAIHFPFPFTPYSIQEDFMAELYRVLEAGKIGIFESPTGTGKSLSLICGALSWLRDFEQKKREEEARLLETGTGPLHDEKDESLCLSSSCEGAAGTPRPAGEPAWVTQFVQKKEERDLVDRLKAEQARRKQREERLQQLQHRVQLKYAAKRLRQEEEERENLLRLSREMLETGPEAERLEQLESGEEELVLAEYESDEEKKVASRVDEDEDDLEEEHITKIYYCSRTHSQLAQFVHEVKKSPFGKDVRLVSLGSRQNLCVNEDVKSLGSVQLINDRCVDMQRSRHEKKKGAEEEKPKRRRQEKQAACPFYNHEQMGLLRDEALAEVKDMEQLLALGKEARACPYYGSRLAIPAAQLVVLPYQMLLHAATRQAAGIRLQDQVVIIDEAHNLIDTITGMHSVEVSGSQLCQAHSQLLQYVERYGKRLKAKNLMYLKQILYLLEKFVAVLGGNIKQNPNTQSLSQTGTELKTINDFLFQSQIDNINLFKVQRYCEKSMISRKLFGFTERYGAVFSSREQPKLAGFQQFLQSLQPRTTEALAAPADESQASTLRPASPLMHIQGFLAALTTANQDGRVILSRQGSLSQSTLKFLLLNPAVHFAQVVKECRAVVIAGGTMQPVSDFRQQLLACAGVEAERVVEFSCGHVIPPDNILPLVICSGISNQPLEFTFQKRELPQMMDEVGRILCNLCGVVPGGVVCFFPSYEYLRQVHAHWEKGGLLGRLAARKKIFQEPKSAHQVEQVLLAYSRCIQACGQERGQVTGALLLSVVGGKMSEGINFSDNLGRCVVMVGMPFPNIRSAELQEKMAYLDQTLSPRPGTPREGSGGEPVHEGRQPVHRQGHQAPEGFCQRSAPGPAICPAPCPGQAAGLDPSPCGGQSYLWPRHCCCAEVSPGEVGLFLMGNHTTAWRRALPLSCPLETVFVVGVVCGDPVTKVKPRRRVWSPECCQDPGTGVSSRRRKWGNPE.

Residues 9–445 (GAIHFPFPFT…KNLMYLKQIL (437 aa)) enclose the Helicase ATP-binding domain. ATP is bound at residue 44–51 (SPTGTGKS). S262 bears the Phosphoserine mark. C267 and C285 together coordinate [4Fe-4S] cluster. The segment covering 289–304 (QRSRHEKKKGAEEEKP) has biased composition (basic and acidic residues). Positions 289–312 (QRSRHEKKKGAEEEKPKRRRQEKQ) are disordered. The [4Fe-4S] cluster site is built by C315 and C350. The short motif at 393–396 (DEAH) is the DEAH box element. Residues 818–849 (TLSPRPGTPREGSGGEPVHEGRQPVHRQGHQA) are disordered.

Belongs to the DEAD box helicase family. DEAH subfamily. DDX11/CHL1 sub-subfamily. Associates with the CTF18-RFC complex. Associates with a cohesin complex composed of RAD21, SMC1 proteins and SMC3. Interacts with CHTF18. Interacts with DSCC1. Interacts with FEN1; this interaction is direct and increases flap endonuclease activity of FEN1. Interacts with PCNA. Interacts with POLR1A and UBTF. Interacts with RAD21, SMC1 proteins and SMC3. Interacts with RFC2. Interacts with TIMELESS; this interaction increases recruitment of both proteins onto chromatin in response to replication stress induction by hydroxyurea. In terms of assembly, (Microbial infection) Interacts with bovine papillomavirus type 1 regulatory protein E2; this interaction stimulates the recruitment of E2 onto mitotic chromosomes. The cofactor is Mg(2+). [4Fe-4S] cluster serves as cofactor. Expressed in melanoma cells. Not detected in epidermal melanocytes of normal skin (at protein level). Highly expressed in spleen, B-cells, thymus, testis, ovary, small intestine and pancreas. Very low expression seen in brain. Expressed in dividing cells and/or cells undergoing high levels of recombination. No expression detected in cells signaled to terminally differentiate. Expressed weakly in keratinocytes.

It is found in the nucleus. It localises to the nucleolus. The protein resides in the cytoplasm. The protein localises to the cytoskeleton. Its subcellular location is the spindle pole. It is found in the midbody. It localises to the microtubule organizing center. The protein resides in the centrosome. The protein localises to the chromosome. The enzyme catalyses Couples ATP hydrolysis with the unwinding of duplex DNA at the replication fork by translocating in the 5'-3' direction. This creates two antiparallel DNA single strands (ssDNA). The leading ssDNA polymer is the template for DNA polymerase III holoenzyme which synthesizes a continuous strand.. It catalyses the reaction ATP + H2O = ADP + phosphate + H(+). ATPase activity is stimulated by high magnesium salt levels (up to a 0.1 M), and potassium salts (glutamate, chloride or acetate) are more effective than the corresponding sodium salts. ATPase activity is enhanced by the long non-coding RNA (lncRNA) cohesion regulator noncoding RNA (CONCR). Double-stranded DNA helicase activity is maximal with magnesium ions at low concentrations (0.5-1 mM) whereas is markedly inhibited at higher levels (5 mM and above). Double-stranded DNA helicase activity is stimulated by 25-50 mM potassium acetate, stimulated to a lesser extent by 25 mM of ammonium acetate, and markedly inhibited by sodium acetate. Its function is as follows. DNA-dependent ATPase and ATP-dependent DNA helicase that participates in various functions in genomic stability, including DNA replication, DNA repair and heterochromatin organization as well as in ribosomal RNA synthesis. Its double-stranded DNA helicase activity requires either a minimal 5'-single-stranded tail length of approximately 15 nt (flap substrates) or 10 nt length single-stranded gapped DNA substrates of a partial duplex DNA structure for helicase loading and translocation along DNA in a 5' to 3' direction. The helicase activity is capable of displacing duplex regions up to 100 bp, which can be extended up to 500 bp by the replication protein A (RPA) or the cohesion CTF18-replication factor C (Ctf18-RFC) complex activities. Also shows ATPase- and helicase activities on substrates that mimic key DNA intermediates of replication, repair and homologous recombination reactions, including forked duplex, anti-parallel G-quadruplex and three-stranded D-loop DNA molecules. Plays a role in DNA double-strand break (DSB) repair at the DNA replication fork during DNA replication recovery from DNA damage. Recruited with TIMELESS factor upon DNA-replication stress response at DNA replication fork to preserve replication fork progression, and hence ensure DNA replication fidelity. Also cooperates with TIMELESS factor during DNA replication to regulate proper sister chromatid cohesion and mitotic chromosome segregation. Stimulates 5'-single-stranded DNA flap endonuclease activity of FEN1 in an ATP- and helicase-independent manner; and hence it may contribute in Okazaki fragment processing at DNA replication fork during lagging strand DNA synthesis. Its ability to function at DNA replication fork is modulated by its binding to long non-coding RNA (lncRNA) cohesion regulator non-coding RNA DDX11-AS1/CONCR, which is able to increase both DDX11 ATPase activity and binding to DNA replicating regions. Also plays a role in heterochromatin organization. Involved in rRNA transcription activation through binding to active hypomethylated rDNA gene loci by recruiting UBTF and the RNA polymerase Pol I transcriptional machinery. Plays a role in embryonic development and prevention of aneuploidy. Involved in melanoma cell proliferation and survival. Associates with chromatin at DNA replication fork regions. Binds to single- and double-stranded DNAs. In terms of biological role, (Microbial infection) Required for bovine papillomavirus type 1 regulatory protein E2 loading onto mitotic chromosomes during DNA replication for the viral genome to be maintained and segregated. This is ATP-dependent DNA helicase DDX11 from Homo sapiens (Human).